Here is a 275-residue protein sequence, read N- to C-terminus: tRNA (guanine-N(1)-)-methyltransferase (275 aa).

Residues G124 and I149–L154 each bind S-adenosyl-L-methionine.

It belongs to the RNA methyltransferase TrmD family. As to quaternary structure, homodimer.

Its subcellular location is the cytoplasm. It catalyses the reaction guanosine(37) in tRNA + S-adenosyl-L-methionine = N(1)-methylguanosine(37) in tRNA + S-adenosyl-L-homocysteine + H(+). Its function is as follows. Specifically methylates guanosine-37 in various tRNAs. This chain is tRNA (guanine-N(1)-)-methyltransferase, found in Bifidobacterium animalis subsp. lactis (strain AD011).